The primary structure comprises 362 residues: Cobalt-precorrin-5B C(1)-methyltransferase (362 aa).

Belongs to the CbiD family.

It catalyses the reaction Co-precorrin-5B + S-adenosyl-L-methionine = Co-precorrin-6A + S-adenosyl-L-homocysteine. The protein operates within cofactor biosynthesis; adenosylcobalamin biosynthesis; cob(II)yrinate a,c-diamide from sirohydrochlorin (anaerobic route): step 6/10. In terms of biological role, catalyzes the methylation of C-1 in cobalt-precorrin-5B to form cobalt-precorrin-6A. The sequence is that of Cobalt-precorrin-5B C(1)-methyltransferase from Burkholderia orbicola (strain MC0-3).